We begin with the raw amino-acid sequence, 147 residues long: Large ribosomal subunit protein uL16 (147 aa).

Belongs to the universal ribosomal protein uL16 family. In terms of assembly, part of the 50S ribosomal subunit.

Functionally, binds 23S rRNA and is also seen to make contacts with the A and possibly P site tRNAs. This chain is Large ribosomal subunit protein uL16, found in Clostridium botulinum (strain ATCC 19397 / Type A).